We begin with the raw amino-acid sequence, 486 residues long: BTB/POZ domain and ankyrin repeat-containing protein BOP (486 aa).

The BTB domain occupies 25 to 115 (SDVTFSVEGR…LYSGQVSIVP (91 aa)). Residues 121–135 (RPNCGERGCWHTHCS) form a C2HC NPR-type zinc finger. Residues Cys124, Cys129, His131, and Cys134 each coordinate Zn(2+). 4 ANK repeats span residues 257–286 (QKIRRMRRALDSSDVELVKLMVMGEGLNLD), 287–316 (EALALHYAVENCSREVAKALLELGAADVNY), 321–350 (AGKTPLHIAAEMVSPDMVAVLLDHHADPNV), and 354–388 (DNVTPLDILRTLTSDFLFKGAIPGLTHIEPNKLRL). Disordered regions lie at residues 403–442 (EEGNANNNPPSSTTTTLPMYHHPMNDDHNSSSSSGNNHNI) and 464–486 (QMSDDHGGRHGDPAMYHHSHHDY). Composition is skewed to low complexity over residues 406 to 418 (NANNNPPSSTTTT) and 432 to 442 (SSSSSGNNHNI). The span at 466 to 475 (SDDHGGRHGD) shows a compositional bias: basic and acidic residues.

Belongs to the plant 'ANKYRIN-BTB/POZ' family. 'NOOT-BOP-COCH-like' (NBCL) subfamily. In terms of assembly, homodimer. In terms of tissue distribution, expressed in xylem vessels and parenchyma cells of pedicel vascular tissue in the abscission zone (AZ). Accumulates in developing root nodules and present in roots, especially in the upper part.

The protein resides in the nucleus. Its subcellular location is the cytoplasm. It localises to the cell membrane. The protein operates within protein modification; protein ubiquitination. Its function is as follows. May act as a substrate-specific adapter of an E3 ubiquitin-protein ligase complex (CUL3-RBX1-BTB) which mediates the ubiquitination and subsequent proteasomal degradation of target proteins. Transcriptional co-regulator involved in promoting the fate and determination of leaf and flower meristems. Required for the abscission of senescent organs, probably by regulating the cell wall disorganization in abscission zones (AZs, e.g. pulvini at the base of leaves). Involved in the coordination of the symbiotic nodule developmental program; promotes the formation of root nodules by interacting directly with APP1 to modulate the expression of the nuclear transcription factor Y subunit (NF-YA1), a key nodulin. Necessary for the robust maintenance of nodule identity throughout the nodule developmental program. The polypeptide is BTB/POZ domain and ankyrin repeat-containing protein BOP (Lupinus luteus (European yellow lupine)).